Here is a 456-residue protein sequence, read N- to C-terminus: tRNA(Ile)-lysidine synthase (456 aa).

27–32 (SGGVDS) contacts ATP.

Belongs to the tRNA(Ile)-lysidine synthase family.

The protein localises to the cytoplasm. The catalysed reaction is cytidine(34) in tRNA(Ile2) + L-lysine + ATP = lysidine(34) in tRNA(Ile2) + AMP + diphosphate + H(+). Ligates lysine onto the cytidine present at position 34 of the AUA codon-specific tRNA(Ile) that contains the anticodon CAU, in an ATP-dependent manner. Cytidine is converted to lysidine, thus changing the amino acid specificity of the tRNA from methionine to isoleucine. In Vibrio atlanticus (strain LGP32) (Vibrio splendidus (strain Mel32)), this protein is tRNA(Ile)-lysidine synthase.